The chain runs to 411 residues: Aspartokinase (411 aa).

An ATP-binding site is contributed by 7–10 (KFGG). 25-30 (RVIEEK) is a binding site for substrate. Ser-41 serves as a coordination point for ATP. Residues 47–49 (TDE), Glu-74, 125–126 (LN), 150–153 (RGGS), and Ser-153 each bind substrate. ATP is bound by residues 173 to 174 (TD) and 179 to 184 (FTTDPR). ACT domains lie at 264-338 (VTVF…SETG) and 344-411 (IVGS…KSER). Substrate is bound by residues 289–291 (NVD), Gln-295, 355–356 (VA), 369–370 (QV), and 376–377 (SE).

It belongs to the aspartokinase family. In terms of assembly, tetramer consisting of 2 isoforms Alpha (catalytic and regulation) and of a homodimer of 2 isoforms Beta (regulation).

The catalysed reaction is L-aspartate + ATP = 4-phospho-L-aspartate + ADP. It functions in the pathway amino-acid biosynthesis; L-lysine biosynthesis via DAP pathway; (S)-tetrahydrodipicolinate from L-aspartate: step 1/4. The protein operates within amino-acid biosynthesis; L-methionine biosynthesis via de novo pathway; L-homoserine from L-aspartate: step 1/3. It participates in amino-acid biosynthesis; L-threonine biosynthesis; L-threonine from L-aspartate: step 1/5. Its activity is regulated as follows. Lysine-sensitive. Functionally, catalyzes the phosphorylation of the beta-carboxyl group of aspartic acid with ATP to yield 4-phospho-L-aspartate, which is involved in the branched biosynthetic pathway leading to the biosynthesis of amino acids threonine, isoleucine and methionine. This chain is Aspartokinase (lysC), found in Bacillus sp. (strain MGA3).